A 293-amino-acid chain; its full sequence is Protease HtpX (293 aa).

2 helical membrane passes run 4–24 (IALF…VLSL) and 32–52 (VTGL…VSLL). H139 serves as a coordination point for Zn(2+). The active site involves E140. H143 contributes to the Zn(2+) binding site. 2 consecutive transmembrane segments (helical) span residues 158–178 (VVNT…AGFL) and 193–213 (LIYF…ASII). E222 is a binding site for Zn(2+).

This sequence belongs to the peptidase M48B family. Zn(2+) serves as cofactor.

The protein localises to the cell inner membrane. This chain is Protease HtpX, found in Cronobacter sakazakii (strain ATCC BAA-894) (Enterobacter sakazakii).